The sequence spans 274 residues: 2,3,4,5-tetrahydropyridine-2,6-dicarboxylate N-succinyltransferase (274 aa).

Arginine 106 and aspartate 143 together coordinate substrate.

Belongs to the transferase hexapeptide repeat family. In terms of assembly, homotrimer.

It localises to the cytoplasm. The catalysed reaction is (S)-2,3,4,5-tetrahydrodipicolinate + succinyl-CoA + H2O = (S)-2-succinylamino-6-oxoheptanedioate + CoA. It functions in the pathway amino-acid biosynthesis; L-lysine biosynthesis via DAP pathway; LL-2,6-diaminopimelate from (S)-tetrahydrodipicolinate (succinylase route): step 1/3. This Rickettsia prowazekii (strain Madrid E) protein is 2,3,4,5-tetrahydropyridine-2,6-dicarboxylate N-succinyltransferase.